The primary structure comprises 304 residues: Beta-lactamase-like protein str6 (304 aa).

It belongs to the beta-lactamase family.

It functions in the pathway mycotoxin biosynthesis. Beta-lactamase-like protein; part of the gene cluster that mediates the biosynthesis of strobilurin A, an antifungal polyketide that contains a key beta-methoxyacrylate toxophore that targets the complex III of the mitochondrial electron transport chain. Strobilurin biosynthesis begins with construction of benzoyl CoA by step-wise elimination of ammonia from phenylalanine by the phenylalanine ammonia-lyase str11, oxygenation by str8 and retro-Claisen reaction to form benzoic acid, which is activated to its CoA thiolester benzoyl CoA by the dedicated CoA ligase str10. Benzoyl CoA forms the starter unit for the highly reducing polyketide synthase stpks1 that produces the polyketide prestrobilutin A. The FAD-dependent oxygenase str9 then catalyzes the key oxidative rearrangement responsible for the creation of the beta-methoxyacrylate toxophore. Str9 performs epoxidation of the 2,3 olefin of prestrobilutin A, followed by Meinwald rearrangement to furnish the aldehyde intermediate. Rapid enolization of the aldehyde intermediate would give the beta-methoxyacrylate skeleton and methylations catalyzed by str2 and str3 complete the synthesis and lead to the production of strobilurin A. The short-chain dehydrogenase stl2 and the dehydrogenase str4 play a role in the shunt pathway leading to the production of bolineol. The cluster encodes no obvious halogenase gene that could be involved in production of strobilurin B, nor any obvious dimethylallyl-transferase that could be involved in the production of strobilurin G. It is possible that unknown proteins encoded in, or near, the cluster (such as str1 or stl1) may form new classes of halogenases or dimethylally-transferases, or that the responsible genes are located elsewhere on the genome. Similarly, proteins encoded by str5/str6 hydrolases appear to have no chemical role in the biosynthesis of strobilurin A. Finally, no obvious self-resistance gene is found within the cluster. The chain is Beta-lactamase-like protein str6 from Strobilurus tenacellus.